The primary structure comprises 59 residues: Mitochondrial sheath formation-associated protein (59 aa).

The Mitochondrial intermembrane segment spans residues 1-6 (MIVLGW). 2 helical membrane-spanning segments follow: residues 2-22 (IVLG…FPEL) and 7-23 (MFFV…PELM). The Cytoplasmic portion of the chain corresponds to 24-40 (PPTLKWQERWPVQESKT).

Interacts with VDAC3.

It localises to the mitochondrion outer membrane. Functionally, regulates sperm development. May be involved in mitochondrial sheath formation. The chain is Mitochondrial sheath formation-associated protein from Homo sapiens (Human).